A 228-amino-acid chain; its full sequence is Mediator of RNA polymerase II transcription subunit 7-A (228 aa).

It belongs to the Mediator complex subunit 7 family. Component of the Mediator complex.

It localises to the nucleus. In terms of biological role, component of the Mediator complex, a coactivator involved in the regulated transcription of nearly all RNA polymerase II-dependent genes. Mediator functions as a bridge to convey information from gene-specific regulatory proteins to the basal RNA polymerase II transcription machinery. Mediator is recruited to promoters by direct interactions with regulatory proteins and serves as a scaffold for the assembly of a functional preinitiation complex with RNA polymerase II and the general transcription factors. The sequence is that of Mediator of RNA polymerase II transcription subunit 7-A (med7-a) from Xenopus laevis (African clawed frog).